The chain runs to 99 residues: Co-chaperonin GroES (99 aa).

This sequence belongs to the GroES chaperonin family. Heptamer of 7 subunits arranged in a ring. Interacts with the chaperonin GroEL.

Its subcellular location is the cytoplasm. Together with the chaperonin GroEL, plays an essential role in assisting protein folding. The GroEL-GroES system forms a nano-cage that allows encapsulation of the non-native substrate proteins and provides a physical environment optimized to promote and accelerate protein folding. GroES binds to the apical surface of the GroEL ring, thereby capping the opening of the GroEL channel. The protein is Co-chaperonin GroES of Corynebacterium kroppenstedtii (strain DSM 44385 / JCM 11950 / CIP 105744 / CCUG 35717).